Consider the following 857-residue polypeptide: Bifunctional levopimaradiene synthase, chloroplastic (857 aa).

The transit peptide at 1-33 (MALPSSSLSSQIHTGATTQCIPHFHGSLNAGTS) directs the protein to the chloroplast. Lys257 serves as a coordination point for substrate. Residues Asp390 and Asp392 each contribute to the Mg(2+) site. Residues 390-393 (DIDD) carry the DXDD motif motif. Lys477 is a substrate binding site. Mg(2+) is bound by residues Asp609, Asp613, Asn753, Thr757, and Glu761. The short motif at 609-613 (DDLYD) is the DDXXD motif element.

It belongs to the terpene synthase family. Tpsd subfamily. It depends on Mg(2+) as a cofactor.

It localises to the plastid. Its subcellular location is the chloroplast. The enzyme catalyses (2E,6E,10E)-geranylgeranyl diphosphate = (+)-copalyl diphosphate. The catalysed reaction is (+)-copalyl diphosphate = abieta-7,13-diene + diphosphate. It carries out the reaction (+)-copalyl diphosphate = abieta-8(14),12-diene + diphosphate. It catalyses the reaction (+)-copalyl diphosphate = neoabietadiene + diphosphate. The protein operates within terpene metabolism; oleoresin biosynthesis. Functionally, involved in defensive oleoresin formation in conifers in response to insect attack or other injury. Involved in diterpene (C20) olefins biosynthesis. Bifunctional enzyme that catalyzes two sequential cyclizations of geranylgeranyl diphosphate (GGPP) to levopimaradiene. Levopimaradiene is the major products of the enzyme with abietadiene and neoabietadiene. No activity with farnesyl diphosphate (FPP) as substrate. In Pinus banksiana (Jack pine), this protein is Bifunctional levopimaradiene synthase, chloroplastic.